The sequence spans 113 residues: Molt-inhibiting hormone (113 aa).

An N-terminal signal peptide occupies residues 1–35 (MMSRTESRYSSQRTWLLSMVVLAALWSISVQRATA). Disulfide bonds link Cys-42/Cys-79, Cys-59/Cys-75, and Cys-62/Cys-88.

This sequence belongs to the arthropod CHH/MIH/GIH/VIH hormone family.

The protein resides in the secreted. In terms of biological role, inhibits Y-organs where molting hormone (ecdysteroid) is secreted. A molting cycle is initiated when MIH secretion diminishes or stops. The protein is Molt-inhibiting hormone of Metacarcinus magister (Dungeness crab).